Consider the following 187-residue polypeptide: Ribosome-recycling factor (187 aa).

It belongs to the RRF family.

The protein localises to the cytoplasm. Responsible for the release of ribosomes from messenger RNA at the termination of protein biosynthesis. May increase the efficiency of translation by recycling ribosomes from one round of translation to another. The protein is Ribosome-recycling factor of Nitrobacter winogradskyi (strain ATCC 25391 / DSM 10237 / CIP 104748 / NCIMB 11846 / Nb-255).